The following is a 239-amino-acid chain: Large ribosomal subunit protein uL1 (239 aa).

It belongs to the universal ribosomal protein uL1 family. In terms of assembly, part of the 50S ribosomal subunit.

Functionally, binds directly to 23S rRNA. The L1 stalk is quite mobile in the ribosome, and is involved in E site tRNA release. In terms of biological role, protein L1 is also a translational repressor protein, it controls the translation of the L11 operon by binding to its mRNA. The polypeptide is Large ribosomal subunit protein uL1 (Rickettsia canadensis (strain McKiel)).